Consider the following 88-residue polypeptide: Small ribosomal subunit protein uS15 (88 aa).

It belongs to the universal ribosomal protein uS15 family. In terms of assembly, part of the 30S ribosomal subunit. Forms a bridge to the 50S subunit in the 70S ribosome, contacting the 23S rRNA.

In terms of biological role, one of the primary rRNA binding proteins, it binds directly to 16S rRNA where it helps nucleate assembly of the platform of the 30S subunit by binding and bridging several RNA helices of the 16S rRNA. Its function is as follows. Forms an intersubunit bridge (bridge B4) with the 23S rRNA of the 50S subunit in the ribosome. This Trichlorobacter lovleyi (strain ATCC BAA-1151 / DSM 17278 / SZ) (Geobacter lovleyi) protein is Small ribosomal subunit protein uS15.